The primary structure comprises 223 residues: MIF4G domain-containing protein B (223 aa).

Positions 9 to 206 (DYKIQGFDAD…LEMIEYRAAG (198 aa)) constitute an MIF4G domain.

Belongs to the MIF4GD family. In terms of assembly, interacts with eif4g1, eif4g2 and slbp; probably tethered by SLBP to the 3'-end of mRNAs ending with the histone stem-loop, it also interacts with eif4g1 which is bound to their 5'-end.

The protein localises to the cytoplasm. It is found in the nucleus. Its function is as follows. Functions in replication-dependent translation of histone mRNAs which differ from other eukaryotic mRNAs in that they do not end with a poly-A tail but a stem-loop. May participate in circularizing those mRNAs specifically enhancing their translation. The polypeptide is MIF4G domain-containing protein B (mif4gd-b) (Xenopus laevis (African clawed frog)).